We begin with the raw amino-acid sequence, 73 residues long: UPF0499 protein CHGG_06021 (73 aa).

Residues 1–20 form the signal peptide; the sequence is MKSSIHVVLFFLLSLVASMA. Intrachain disulfides connect Cys-41/Cys-55, Cys-48/Cys-60, and Cys-54/Cys-69.

It belongs to the UPF0499 family.

Its subcellular location is the secreted. The protein is UPF0499 protein CHGG_06021 of Chaetomium globosum (strain ATCC 6205 / CBS 148.51 / DSM 1962 / NBRC 6347 / NRRL 1970) (Soil fungus).